Consider the following 216-residue polypeptide: Adenylate kinase (216 aa).

An ATP-binding site is contributed by 10 to 15 (GAGKGT). Positions 30–59 (STGDMFRAAMKAETELGLQAKSFIDKGALV) are NMP. AMP is bound by residues Thr-31, Arg-36, 57 to 59 (ALV), 85 to 88 (GFPR), and Gln-92. Residues 126–163 (GRRICKECGATYHLEFNPPAKADVCDKCGGELYQRSDD) form an LID region. Arg-127 is an ATP binding site. Residues Cys-130 and Cys-133 each coordinate Zn(2+). ATP is bound at residue 136 to 137 (TY). Zn(2+) is bound by residues Cys-150 and Cys-153. Arg-160 and Arg-171 together coordinate AMP. ATP is bound at residue Gln-199.

This sequence belongs to the adenylate kinase family. Monomer.

It localises to the cytoplasm. The enzyme catalyses AMP + ATP = 2 ADP. Its pathway is purine metabolism; AMP biosynthesis via salvage pathway; AMP from ADP: step 1/1. In terms of biological role, catalyzes the reversible transfer of the terminal phosphate group between ATP and AMP. Plays an important role in cellular energy homeostasis and in adenine nucleotide metabolism. The sequence is that of Adenylate kinase from Bacillus cytotoxicus (strain DSM 22905 / CIP 110041 / 391-98 / NVH 391-98).